A 364-amino-acid polypeptide reads, in one-letter code: uncharacterized protein (364 aa).

This is an uncharacterized protein from Saccharum officinarum (Sugarcane).